A 243-amino-acid polypeptide reads, in one-letter code: Small ribosomal subunit protein uS2c (243 aa).

The protein belongs to the universal ribosomal protein uS2 family.

It localises to the plastid. The protein resides in the chloroplast. The chain is Small ribosomal subunit protein uS2c (rps2) from Cyanidium caldarium (Red alga).